A 164-amino-acid chain; its full sequence is RNA pyrophosphohydrolase (164 aa).

Positions 8–153 constitute a Nudix hydrolase domain; the sequence is PYRSNVGAAL…KRPIYERLAR (146 aa). Residues 45–66 carry the Nudix box motif; it reads GGIDGDEDPAAAVLRELDEEIG.

This sequence belongs to the Nudix hydrolase family. RppH subfamily. A divalent metal cation is required as a cofactor.

Functionally, accelerates the degradation of transcripts by removing pyrophosphate from the 5'-end of triphosphorylated RNA, leading to a more labile monophosphorylated state that can stimulate subsequent ribonuclease cleavage. This Acidiphilium cryptum (strain JF-5) protein is RNA pyrophosphohydrolase.